Here is a 447-residue protein sequence, read N- to C-terminus: Hemopexin (447 aa).

Residues 1–18 (MRLIQALSLCLALSLSLA) form the signal peptide. The segment at 20-44 (PPQHKEDHSHKGKPGGEGHKHELHH) is disordered. The span at 22 to 44 (QHKEDHSHKGKPGGEGHKHELHH) shows a compositional bias: basic and acidic residues. Hemopexin repeat units lie at residues 53 to 93 (GIEF…FPEL), 99 to 151 (LGHV…FPGI), 152 to 197 (PDHL…FKSM), 198 to 243 (PNCT…FMRC), 262 to 304 (RVHL…FKEL), 305 to 351 (HSEV…VLGI), 352 to 395 (EGPV…TITQ), and 396 to 441 (FKRI…VSQQ). Asparagine 87 is a glycosylation site (N-linked (GlcNAc...) asparagine). 2 N-linked (GlcNAc...) asparagine glycosylation sites follow: asparagine 168 and asparagine 199. Histidine 293 lines the heme pocket.

This sequence belongs to the hemopexin family.

It is found in the secreted. Binds heme and transports it to the liver for breakdown and iron recovery, after which the free hemopexin returns to the circulation. The sequence is that of Hemopexin from Danio rerio (Zebrafish).